The chain runs to 223 residues: ATP-dependent Clp protease proteolytic subunit 2 (223 aa).

Ser-118 functions as the Nucleophile in the catalytic mechanism. Residue His-143 is part of the active site.

This sequence belongs to the peptidase S14 family. Fourteen ClpP subunits assemble into 2 heptameric rings which stack back to back to give a disk-like structure with a central cavity, resembling the structure of eukaryotic proteasomes.

It localises to the cytoplasm. It catalyses the reaction Hydrolysis of proteins to small peptides in the presence of ATP and magnesium. alpha-casein is the usual test substrate. In the absence of ATP, only oligopeptides shorter than five residues are hydrolyzed (such as succinyl-Leu-Tyr-|-NHMec, and Leu-Tyr-Leu-|-Tyr-Trp, in which cleavage of the -Tyr-|-Leu- and -Tyr-|-Trp bonds also occurs).. Functionally, cleaves peptides in various proteins in a process that requires ATP hydrolysis. Has a chymotrypsin-like activity. Plays a major role in the degradation of misfolded proteins. The polypeptide is ATP-dependent Clp protease proteolytic subunit 2 (Leifsonia xyli subsp. xyli (strain CTCB07)).